The chain runs to 229 residues: 7-cyano-7-deazaguanine synthase (229 aa).

15 to 25 (LSGGLDSATVV) lines the ATP pocket. Cys-194, Cys-204, Cys-207, and Cys-210 together coordinate Zn(2+).

It belongs to the QueC family. Zn(2+) serves as cofactor.

The enzyme catalyses 7-carboxy-7-deazaguanine + NH4(+) + ATP = 7-cyano-7-deazaguanine + ADP + phosphate + H2O + H(+). Its pathway is purine metabolism; 7-cyano-7-deazaguanine biosynthesis. Catalyzes the ATP-dependent conversion of 7-carboxy-7-deazaguanine (CDG) to 7-cyano-7-deazaguanine (preQ(0)). The protein is 7-cyano-7-deazaguanine synthase of Pseudomonas syringae pv. syringae (strain B728a).